The primary structure comprises 190 residues: Surfactant protein C (190 aa).

A propeptide spanning residues 1–23 (MDVGSKEVLIENPPDYSAAPQGR) is cleaved from the precursor. Residue Cys28 is the site of S-palmitoyl cysteine attachment. A propeptide spanning residues 59–190 (HMSQKHTEMV…LCGEVPLYYI (132 aa)) is cleaved from the precursor. One can recognise a BRICHOS domain in the interval 94–190 (FSIGSTGIVV…LCGEVPLYYI (97 aa)). Cysteines 121 and 182 form a disulfide.

It is found in the secreted. It localises to the extracellular space. The protein localises to the surface film. Its function is as follows. Pulmonary surfactant associated proteins promote alveolar stability by lowering the surface tension at the air-liquid interface in the peripheral air spaces. This chain is Surfactant protein C (SFTPC), found in Neovison vison (American mink).